Reading from the N-terminus, the 795-residue chain is Phenylalanine--tRNA ligase beta subunit (795 aa).

One can recognise a tRNA-binding domain in the interval 39–148; the sequence is KSEFHGVVVG…KETLVGINVY (110 aa). Positions 400 to 475 constitute a B5 domain; the sequence is HKNNTIRLHH…RIYEYNNVHL (76 aa). Asp453, Asp459, and Asp463 together coordinate Mg(2+). The 94-residue stretch at 701–794 folds into the FDX-ACB domain; sequence SKFPTVRRDI…LQKKFQAVLR (94 aa).

Belongs to the phenylalanyl-tRNA synthetase beta subunit family. Type 1 subfamily. As to quaternary structure, tetramer of two alpha and two beta subunits. Requires Mg(2+) as cofactor.

The protein localises to the cytoplasm. The catalysed reaction is tRNA(Phe) + L-phenylalanine + ATP = L-phenylalanyl-tRNA(Phe) + AMP + diphosphate + H(+). The polypeptide is Phenylalanine--tRNA ligase beta subunit (pheT) (Buchnera aphidicola subsp. Acyrthosiphon pisum (strain APS) (Acyrthosiphon pisum symbiotic bacterium)).